Consider the following 55-residue polypeptide: UPF0391 membrane protein RSp1666 (55 aa).

The next 2 membrane-spanning stretches (helical) occupy residues 5 to 25 (AVIF…GIAA) and 33 to 53 (ILFM…LVAG).

Belongs to the UPF0391 family.

It is found in the cell membrane. This chain is UPF0391 membrane protein RSp1666, found in Ralstonia nicotianae (strain ATCC BAA-1114 / GMI1000) (Ralstonia solanacearum).